The following is a 337-amino-acid chain: Probable tyrosine--tRNA ligase, cytoplasmic (337 aa).

Tyrosine 35 contacts L-tyrosine. The short motif at 40–48 (ITGKPHIAY) is the 'HIGH' region element. Residues tyrosine 162, glutamine 166, aspartate 169, and glutamine 184 each coordinate L-tyrosine. Positions 218 to 222 (KMSSS) match the 'KMSKS' region motif.

Belongs to the class-I aminoacyl-tRNA synthetase family. Homodimer.

It is found in the cytoplasm. The enzyme catalyses tRNA(Tyr) + L-tyrosine + ATP = L-tyrosyl-tRNA(Tyr) + AMP + diphosphate + H(+). This Encephalitozoon cuniculi (strain GB-M1) (Microsporidian parasite) protein is Probable tyrosine--tRNA ligase, cytoplasmic.